The primary structure comprises 376 residues: cAMP-dependent protein kinase type I regulatory subunit (376 aa).

The dimerization and phosphorylation stretch occupies residues methionine 1–valine 131. Residues proline 72–glycine 93 form a disordered region. The Pseudophosphorylation motif motif lies at arginine 91–isoleucine 95. Serine 96 carries the post-translational modification Phosphoserine. 3',5'-cyclic AMP-binding positions include leucine 132–arginine 247, glutamate 197, arginine 206, isoleucine 250–phenylalanine 371, glutamate 321, and arginine 330.

The protein belongs to the cAMP-dependent kinase regulatory chain family. In terms of assembly, tetramer, composed of 2 regulatory (R) and 2 catalytic (C) subunits. In the presence of cAMP it dissociates into 2 active monomeric C subunits and an R dimer. The pseudophosphorylation site binds to the substrate-binding region of the catalytic chain but is not phosphorylated. The physiological significance of phosphorylations by other kinases is unclear.

The chain is cAMP-dependent protein kinase type I regulatory subunit (Pka-R1) from Drosophila melanogaster (Fruit fly).